The primary structure comprises 168 residues: Phosphopantetheine adenylyltransferase (168 aa).

Ser9 is a substrate binding site. Residues 9–10 (SF) and His17 contribute to the ATP site. Lys41, Leu73, and Arg87 together coordinate substrate. ATP contacts are provided by residues 88–90 (GMR), Glu98, and 123–129 (WIYTSSS).

The protein belongs to the bacterial CoaD family. In terms of assembly, homohexamer. Mg(2+) serves as cofactor.

It localises to the cytoplasm. It catalyses the reaction (R)-4'-phosphopantetheine + ATP + H(+) = 3'-dephospho-CoA + diphosphate. The protein operates within cofactor biosynthesis; coenzyme A biosynthesis; CoA from (R)-pantothenate: step 4/5. Reversibly transfers an adenylyl group from ATP to 4'-phosphopantetheine, yielding dephospho-CoA (dPCoA) and pyrophosphate. In Desulfosudis oleivorans (strain DSM 6200 / JCM 39069 / Hxd3) (Desulfococcus oleovorans), this protein is Phosphopantetheine adenylyltransferase.